The following is a 629-amino-acid chain: tRNA uridine 5-carboxymethylaminomethyl modification enzyme MnmG (629 aa).

Residues 18–23, V130, and S188 each bind FAD; that span reads GGGHAG. Residue 280–294 participates in NAD(+) binding; the sequence is GPRYCPSIEDKVVRF. Position 377 (Q377) interacts with FAD.

It belongs to the MnmG family. As to quaternary structure, homodimer. Heterotetramer of two MnmE and two MnmG subunits. The cofactor is FAD.

It localises to the cytoplasm. NAD-binding protein involved in the addition of a carboxymethylaminomethyl (cmnm) group at the wobble position (U34) of certain tRNAs, forming tRNA-cmnm(5)s(2)U34. The sequence is that of tRNA uridine 5-carboxymethylaminomethyl modification enzyme MnmG from Granulibacter bethesdensis (strain ATCC BAA-1260 / CGDNIH1).